The chain runs to 423 residues: Steroid hormone receptor ERR1 (423 aa).

The segment at 1–67 (MSSQVVGIEP…GAGPGEQGGG (67 aa)) is disordered. Residues 1-76 (MSSQVVGIEP…GKLVLSSLPK (76 aa)) form a repressor domain region. Lys14 participates in a covalent cross-link: Glycyl lysine isopeptide (Lys-Gly) (interchain with G-Cter in SUMO). 2 positions are modified to phosphoserine: Ser19 and Ser22. The span at 58-67 (GAGPGEQGGG) shows a compositional bias: gly residues. The nuclear receptor DNA-binding region spans 76–151 (KRLCLVCGDV…VGMLKEGVRL (76 aa)). 2 consecutive NR C4-type zinc fingers follow at residues 79-99 (CLVCGDVASGYHYGVASCEAC) and 115-134 (CPASNECEITKRRRKACQAC). 4 positions are modified to N6-acetyllysine; by PCAF/KAT2B: Lys129, Lys138, Lys160, and Lys162. A Glycyl lysine isopeptide (Lys-Gly) (interchain with G-Cter in SUMO2) cross-link involves residue Lys189. The region spanning 193 to 421 (PVNALVSHLL…KLFLEMLEAM (229 aa)) is the NR LBD domain. Residue Lys403 forms a Glycyl lysine isopeptide (Lys-Gly) (interchain with G-Cter in SUMO); alternate linkage. Lys403 is covalently cross-linked (Glycyl lysine isopeptide (Lys-Gly) (interchain with G-Cter in SUMO2); alternate). The AF-2 domain stretch occupies residues 403-423 (KLEGKVPMHKLFLEMLEAMMD).

Belongs to the nuclear hormone receptor family. NR3 subfamily. In terms of assembly, binds DNA as a monomer or a homodimer. Interacts (via the AF2 domain) with coactivator PPARGC1A (via the L3 motif); the interaction greatly enhances transcriptional activity of genes involved in energy metabolism. Interacts with PIAS4; the interaction enhances sumoylation. Interacts with MAPK15; promotes re-localization of ESRRA to the cytoplasm through a XPO1-dependent mechanism then inhibits ESRRA transcriptional activity. In terms of processing, phosphorylation on Ser-19 enhances sumoylation on Lys-14 increasing repression of transcriptional activity. Sumoylated with SUMO2. Main site is Lys-14 which is enhanced by phosphorylation on Ser-19, cofactor activation, and by interaction with PIAS4. Sumoylation enhances repression of transcriptional activity, but has no effect on subcellular location nor on DNA binding. Post-translationally, reversibly acetylated. Acetylation by PCAF/KAT2 at Lys-129, Lys-138, Lys-160 and Lys-162 and PCAF/KAT2 decreases transcriptional activity probably by inhibiting DNA-binding activity; deacetylation involves SIRT1 and HDAC8 and increases DNA-binding.

It is found in the nucleus. Its subcellular location is the cytoplasm. In terms of biological role, binds to an ERR-alpha response element (ERRE) containing a single consensus half-site, 5'-TNAAGGTCA-3'. Can bind to the medium-chain acyl coenzyme A dehydrogenase (MCAD) response element NRRE-1 and may act as an important regulator of MCAD promoter. Binds to the C1 region of the lactoferrin gene promoter. Requires dimerization and the coactivator, PGC-1A, for full activity. The ERRalpha/PGC1alpha complex is a regulator of energy metabolism. Induces the expression of PERM1 in the skeletal muscle. The polypeptide is Steroid hormone receptor ERR1 (ESRRA) (Homo sapiens (Human)).